The following is a 418-amino-acid chain: tRNA-2-methylthio-N(6)-dimethylallyladenosine synthase (418 aa).

The 117-residue stretch at 2-118 (PGYYLWTIGC…WREIPEGFIL (117 aa)) folds into the MTTase N-terminal domain. Cysteine 11, cysteine 47, cysteine 81, cysteine 134, cysteine 138, and cysteine 141 together coordinate [4Fe-4S] cluster. Residues 120-351 (LRPPVSANVT…EDLQKETVGK (232 aa)) form the Radical SAM core domain. A TRAM domain is found at 346 to 414 (KETVGKANAA…PWSLQAKLVN (69 aa)).

Belongs to the methylthiotransferase family. MiaB subfamily. As to quaternary structure, monomer. [4Fe-4S] cluster is required as a cofactor.

It is found in the cytoplasm. The enzyme catalyses N(6)-dimethylallyladenosine(37) in tRNA + (sulfur carrier)-SH + AH2 + 2 S-adenosyl-L-methionine = 2-methylsulfanyl-N(6)-dimethylallyladenosine(37) in tRNA + (sulfur carrier)-H + 5'-deoxyadenosine + L-methionine + A + S-adenosyl-L-homocysteine + 2 H(+). In terms of biological role, catalyzes the methylthiolation of N6-(dimethylallyl)adenosine (i(6)A), leading to the formation of 2-methylthio-N6-(dimethylallyl)adenosine (ms(2)i(6)A) at position 37 in tRNAs that read codons beginning with uridine. The sequence is that of tRNA-2-methylthio-N(6)-dimethylallyladenosine synthase from Dehalococcoides mccartyi (strain CBDB1).